A 343-amino-acid chain; its full sequence is KRR1 small subunit processome component homolog (343 aa).

The KH domain occupies 125 to 193 (DIIKIGNLVH…VRDIVVETMN (69 aa)). Over residues 232 to 245 (NISKRKQPKVKKAK) the composition is skewed to basic residues. The tract at residues 232 to 343 (NISKRKQPKV…KLLKANKKKV (112 aa)) is disordered. A coiled-coil region spans residues 270–302 (FLNKEQKQAKRQQERSAKQADAAKRQDERRNKD). Over residues 271–302 (LNKEQKQAKRQQERSAKQADAAKRQDERRNKD) the composition is skewed to basic and acidic residues. Residues 331-343 (LKAKLLKANKKKV) are compositionally biased toward basic residues.

It belongs to the KRR1 family. Monomer. Component of the ribosomal small subunit (SSU) processome.

Its subcellular location is the nucleus. The protein resides in the nucleolus. Required for 40S ribosome biogenesis. Involved in nucleolar processing of pre-18S ribosomal RNA and ribosome assembly. Binds to RNA. Required for female germline development, cell viability during eye development and for survival of dividing cells and epithelial cells during early wing disk development. In Drosophila ananassae (Fruit fly), this protein is KRR1 small subunit processome component homolog.